The primary structure comprises 349 residues: MATAAQRRFCRCACFCSQNLYVARYGLHLRFRDEHQLRRDYGQLLRSRGCVTSKDFQQLLEELEQEVGRRRRLGQESAVRKALIASSYHPARPEVYSSLQDAALAPEFMAAAEYSTSPGADLEGLLQRLETVSEEKRIYRVPVFSAKFCQTLLEELEHFEQSDMPKGRPNTMNNHGVLMYELGLDDPLVTPLRERFLLPLMALLYPDYGGGYLDSHRAFVVKYALGQDLDLGCHYDNAELTLNVALGKDFTGGALYFGGLFQAPAALKETLEVEHVVGSGILHRGGQLHGARPLCKGERWNLVVWLRASAVRNRLCPMCCQKPELVDDEGFGDGFTREEPTTVDVCVLT.

The 95-residue stretch at 214–308 (DSHRAFVVKY…RWNLVVWLRA (95 aa)) folds into the Fe2OG dioxygenase domain. Fe cation contacts are provided by histidine 234, aspartate 236, and histidine 289. Residue arginine 299 participates in 2-oxoglutarate binding.

It belongs to the OGFOD2 family. The cofactor is Fe(2+). It depends on L-ascorbate as a cofactor.

The sequence is that of 2-oxoglutarate and iron-dependent oxygenase domain-containing protein 2 (Ogfod2) from Mus musculus (Mouse).